The primary structure comprises 478 residues: Septin-4 (478 aa).

The segment at 1-115 (MDRSLGWQGN…RSPWGKLDPY (115 aa)) is disordered. Residues 13-26 (PEDRTEAGIKRFLE) are compositionally biased toward basic and acidic residues. Over residues 95-108 (APAPLSPSARPRSP) the composition is skewed to low complexity. Ser-117 and Ser-118 each carry phosphoserine. The 274-residue stretch at 141 to 414 (KGFDFTLMVA…ENYRAQCIQS (274 aa)) folds into the Septin-type G domain. The G1 motif stretch occupies residues 151-158 (GESGLGKS). Residues 151 to 158 (GESGLGKS) and Thr-185 each bind GTP. The segment at 208-211 (DTPG) is G3 motif. The G4 motif stretch occupies residues 289–292 (AKAD). 290-298 (KADTLTPPE) is a binding site for GTP. Ser-325 carries the post-translational modification Phosphoserine. Residues Gly-348 and Arg-363 each coordinate GTP. The tract at residues 428-448 (LTRESGTDFPIPAVPPGTDPE) is disordered. Ser-432 is modified (phosphoserine). Thr-434 carries the post-translational modification Phosphothreonine. Residues 447–478 (PETEKLIREKDEELRRMQEMLHKIQKQMKENY) are a coiled coil.

It belongs to the TRAFAC class TrmE-Era-EngA-EngB-Septin-like GTPase superfamily. Septin GTPase family. In terms of assembly, septins polymerize into heterooligomeric protein complexes that form filaments, and can associate with cellular membranes, actin filaments and microtubules. GTPase activity is required for filament formation. Interacts with SEPTIN8. In a mesenchymal cell line, interacts with SEPTIN9 isoform 2 variants HNA Trp-106 and Phe-111, but not the wild type SEPTIN9. Component of a septin core octameric complex consisting of SEPTIN12, SEPTIN7, SEPTIN6 and SEPTIN2 or SEPTIN4 in the order 12-7-6-2-2-6-7-12 or 12-7-6-4-4-6-7-12. Interacts with SEPTIN14 (via C-terminus). Interacts with DYRK1A. Interacts with SLC6A3/DAT and SNCA/alpha-synuclein. Interacts with STX1A; in the striatum. Interacts with XIAP (via BIR3 domain) following the induction of apoptosis. Interacts with AREL1 (via HECT domain); in the cytoplasm following induction of apoptosis. Part of a complex composed of SEPTIN4 isoform ARTS, XIAP and BCL2, within the complex interacts with both BCL2 (via BH3 domain) and XIAP, ARTS acts as a scaffold protein and stabilizes the complex. Interacts with XIAP (via BIR3 domain) following the induction of apoptosis. In terms of processing, phosphorylated by DYRK1A. Ubiquitinated by AREL1. In terms of tissue distribution, widely expressed in adult and fetal tissues with highest expression in adult brain (at protein level), heart, liver and adrenal gland and fetal heart, kidney, liver and lung. Expressed in presynaptic terminals of dopaminergic neurons projecting from the substantia nigra pars compacta to the striatum (at protein level). Expressed in axonal varicosities in dopaminergic nerve terminals (at protein level). Expressed in the putamen and in the adjacent cerebral cortex (at protein level). Expressed in colonic crypts (at protein level). Also expressed in colorectal cancers and malignant melanomas. Expressed in platelets. As to expression, highly expressed in the brain and heart.

Its subcellular location is the cytoplasm. It is found in the cell projection. The protein localises to the cilium. It localises to the flagellum. The protein resides in the cytoplasmic vesicle. Its subcellular location is the secretory vesicle. It is found in the axon. The protein localises to the dendrite. It localises to the perikaryon. The protein resides in the synapse. Its subcellular location is the mitochondrion. It is found in the nucleus. Filament-forming cytoskeletal GTPase. Pro-apoptotic protein involved in LGR5-positive intestinal stem cell and Paneth cell expansion in the intestines, via its interaction with XIAP. May also play a role in the regulation of cell fate in the intestine. Positive regulator of apoptosis involved in hematopoietic stem cell homeostasis; via its interaction with XIAP. Negative regulator of repair and hair follicle regeneration in response to injury, due to inhibition of hair follicle stem cell proliferation, potentially via its interaction with XIAP. Plays an important role in male fertility and sperm motility. During spermiogenesis, essential for the establishment of the annulus (a fibrous ring structure connecting the midpiece and the principal piece of the sperm flagellum) which is a requisite for the structural and mechanical integrity of the sperm. Involved in the migration of cortical neurons and the formation of neuron leading processes during embryonic development. Required for dopaminergic metabolism in presynaptic autoreceptors; potentially via activity as a presynaptic scaffold protein. Functionally, required for the induction of cell death mediated by TGF-beta and possibly by other apoptotic stimuli. Induces apoptosis through binding and inhibition of XIAP resulting in significant reduction in XIAP levels, leading to caspase activation and cell death. Mediates the interaction between BCL2 and XIAP, thereby positively regulating the ubiquitination and degradation of BCL2 and promoting apoptosis. The polypeptide is Septin-4 (Homo sapiens (Human)).